The following is a 578-amino-acid chain: Glutamate--tRNA ligase (578 aa).

The 'HIGH' region motif lies at 97-107 (PNPDFVIHLGN).

It belongs to the class-I aminoacyl-tRNA synthetase family. Glutamate--tRNA ligase type 2 subfamily.

The protein resides in the cytoplasm. It catalyses the reaction tRNA(Glu) + L-glutamate + ATP = L-glutamyl-tRNA(Glu) + AMP + diphosphate. Its function is as follows. Catalyzes the attachment of glutamate to tRNA(Glu) in a two-step reaction: glutamate is first activated by ATP to form Glu-AMP and then transferred to the acceptor end of tRNA(Glu). The polypeptide is Glutamate--tRNA ligase (Hyperthermus butylicus (strain DSM 5456 / JCM 9403 / PLM1-5)).